Reading from the N-terminus, the 368-residue chain is tRNA-specific 2-thiouridylase MnmA (368 aa).

ATP-binding positions include 10-17 (AMSGGVDS) and methionine 36. Cysteine 108 serves as the catalytic Nucleophile. Cysteine 108 and cysteine 206 are joined by a disulfide. Glycine 132 is a binding site for ATP. Positions 156 to 158 (KDQ) are interaction with tRNA. Cysteine 206 (cysteine persulfide intermediate) is an active-site residue. The segment at 312–313 (RY) is interaction with tRNA.

Belongs to the MnmA/TRMU family.

Its subcellular location is the cytoplasm. The enzyme catalyses S-sulfanyl-L-cysteinyl-[protein] + uridine(34) in tRNA + AH2 + ATP = 2-thiouridine(34) in tRNA + L-cysteinyl-[protein] + A + AMP + diphosphate + H(+). Functionally, catalyzes the 2-thiolation of uridine at the wobble position (U34) of tRNA, leading to the formation of s(2)U34. The protein is tRNA-specific 2-thiouridylase MnmA of Natranaerobius thermophilus (strain ATCC BAA-1301 / DSM 18059 / JW/NM-WN-LF).